The sequence spans 258 residues: UPF0246 protein YaaA (258 aa).

Belongs to the UPF0246 family.

This is UPF0246 protein YaaA from Escherichia coli O45:K1 (strain S88 / ExPEC).